The sequence spans 552 residues: Polypeptide N-acetylgalactosaminyltransferase 14 (552 aa).

Topologically, residues 1 to 6 are cytoplasmic; sequence MRRLTR. The chain crosses the membrane as a helical; Signal-anchor for type II membrane protein span at residues 7–26; the sequence is RLVLPVFGVLWITVLLFFWV. The Lumenal portion of the chain corresponds to 27–552; the sequence is TKRKLEVPTG…MSQHWDMVSS (526 aa). Disulfide bonds link cysteine 101–cysteine 328, cysteine 319–cysteine 397, cysteine 430–cysteine 449, cysteine 476–cysteine 493, and cysteine 517–cysteine 538. Positions 110–215 are catalytic subdomain A; that stretch reads LPPTSIIITF…RDWLQPLLHR (106 aa). Substrate contacts are provided by aspartate 151 and arginine 176. Aspartate 199 contributes to the Mn(2+) binding site. Serine 200 is a binding site for substrate. Histidine 201 is a Mn(2+) binding site. Positions 274–336 are catalytic subdomain B; that stretch reads PIRTPIIAGG…PCSRVGHVFR (63 aa). Residue tryptophan 305 coordinates substrate. Histidine 333 is a binding site for Mn(2+). Residues arginine 336, histidine 339, and tyrosine 341 each coordinate substrate. In terms of domain architecture, Ricin B-type lectin spans 415 to 550; sequence KESSIQKGNI…SLMSQHWDMV (136 aa).

Belongs to the glycosyltransferase 2 family. GalNAc-T subfamily. Mn(2+) is required as a cofactor. In terms of tissue distribution, detected in renal tubules (at protein level). Highly expressed in fetal and adult kidney. Widely expressed at low level. Weakly expressed in whole brain, cerebellum, thymus, lung, mammary gland, liver, stomach, small intestine, colon, pancreas, spleen, bladder, uterus, placenta, testis, ovary, skeletal muscle, leukocyte, B-cell, bone marrow, fetal brain, fetal thymus, fetal lung, fetal liver, fetal small intestine, fetal spleen, fetal skeletal and fetus. Detected in renal tubules (at protein level).

It is found in the golgi apparatus membrane. The enzyme catalyses L-seryl-[protein] + UDP-N-acetyl-alpha-D-galactosamine = a 3-O-[N-acetyl-alpha-D-galactosaminyl]-L-seryl-[protein] + UDP + H(+). The catalysed reaction is L-threonyl-[protein] + UDP-N-acetyl-alpha-D-galactosamine = a 3-O-[N-acetyl-alpha-D-galactosaminyl]-L-threonyl-[protein] + UDP + H(+). It functions in the pathway protein modification; protein glycosylation. Functionally, catalyzes the initial reaction in O-linked oligosaccharide biosynthesis, the transfer of an N-acetyl-D-galactosamine residue to a serine or threonine residue on the protein receptor. Displays activity toward mucin-derived peptide substrates such as Muc2, Muc5AC, Muc7, and Muc13 (-58). May be involved in O-glycosylation in kidney. In Homo sapiens (Human), this protein is Polypeptide N-acetylgalactosaminyltransferase 14 (GALNT14).